A 149-amino-acid polypeptide reads, in one-letter code: MTTVTLVGTRLAEVGAEFVYRGEASGCEGCPYRDQCLNLTTGNRYRITNVRQSGQTLDCAVHENGVRAVEVEPAPIQANVPSKGAYAGSKASLPGPCPHTECPSHPYCEPAGAEFDEEYRISEIVGDPPHDYCMLDRDLTLVELEAPGE.

The protein belongs to the UPF0179 family.

The chain is UPF0179 protein rrnAC1064 from Haloarcula marismortui (strain ATCC 43049 / DSM 3752 / JCM 8966 / VKM B-1809) (Halobacterium marismortui).